Here is a 184-residue protein sequence, read N- to C-terminus: Interferon alpha-3 (184 aa).

The N-terminal stretch at 1–23 (MALPVSLLMALVVLSCHSSCSLG) is a signal peptide. Cystine bridges form between C24-C122 and C52-C162.

This sequence belongs to the alpha/beta interferon family.

Its subcellular location is the secreted. In terms of biological role, produced by macrophages, IFN-alpha have antiviral activities. Interferon stimulates the production of two enzymes: a protein kinase and an oligoadenylate synthetase. The protein is Interferon alpha-3 of Equus caballus (Horse).